Here is a 338-residue protein sequence, read N- to C-terminus: Probable tRNA pseudouridine synthase B (338 aa).

Asp78 (nucleophile) is an active-site residue. In terms of domain architecture, PUA spans 245 to 320 (LPKIILRDSA…IAASPIRVLM (76 aa)).

Belongs to the pseudouridine synthase TruB family. Type 2 subfamily.

The catalysed reaction is uridine(55) in tRNA = pseudouridine(55) in tRNA. Functionally, could be responsible for synthesis of pseudouridine from uracil-55 in the psi GC loop of transfer RNAs. In Methanosarcina acetivorans (strain ATCC 35395 / DSM 2834 / JCM 12185 / C2A), this protein is Probable tRNA pseudouridine synthase B.